The chain runs to 267 residues: 27 kDa primary mesenchyme-specific spicule protein (267 aa).

Residues 1–16 form the signal peptide; that stretch reads MKLLAILLVLPALCFG. The interval 20 to 64 is 11 X 4 AA tandem repeats of G-[PQ]-G-[MQ]; sequence EGPGMGPGMGPGMGPGMGPGMGPGMGPGMGPGMGPGQGQGQGQGQ. Tandem repeats lie at residues 21 to 24, 25 to 28, 29 to 32, 33 to 36, 37 to 40, 41 to 44, 45 to 48, 49 to 52, 53 to 56, 57 to 60, and 61 to 64. Residues 44 to 68 form a disordered region; it reads MGPGMGPGMGPGQGQGQGQGQGQVG. The 142-residue stretch at 79-220 folds into the C-type lectin domain; that stretch reads IGQQCFKMMS…CDEPMYFACS (142 aa). Disulfide bonds link C100/C219 and C197/C211.

As to expression, expressed specifically in the micromere/primary mesenchyme cells (PMC) lineage. Produced uniformly and exclusively by PMCs through the early prism stage and this specificity is further restricted during skeletogenesis to a subpopulation of PMCs associated with the growing tips of the spicules.

It localises to the secreted. May play a role in the regulation or execution of skeletal growth. The chain is 27 kDa primary mesenchyme-specific spicule protein (PM27) from Strongylocentrotus purpuratus (Purple sea urchin).